The chain runs to 359 residues: Protein HEXIM1 (359 aa).

The segment at Met1–His163 is disordered. The segment covering Tyr9–Thr19 has biased composition (polar residues). Basic and acidic residues-rich tracts occupy residues Pro34–Trp47 and Cys84–Asn93. 2 positions are modified to phosphoserine: Ser97 and Ser98. The span at Leu148–His163 shows a compositional bias: basic residues. The interval Lys150–Lys177 is basic region; mediates nuclear localization and interaction with 7SK snRNA and NR3C1. Positions Pro202–Thr205 are interaction with P-TEFb. The segment at Met210–Gly250 is autoinhibitory acidic region; in absence of 7SK snRNA interacts with the basic region preventing interaction with P-TEFb and modulating subcellular localization. Positions His213–Phe262 are disordered. A Phosphoserine modification is found at Ser233. Thr236 bears the Phosphothreonine mark. The segment covering Thr236–Gly251 has biased composition (acidic residues). Phosphoserine occurs at positions 237, 252, and 260. Residues Ser283 to Gln349 adopt a coiled-coil conformation. Residues Glu286–Arg314 are mediates interaction with CCNT1. Residues Leu310–Ser355 form a required for inhibition of ESR1-dependent transcription region.

The protein belongs to the HEXIM family. In terms of assembly, homooligomer and heterooligomer with HEXIM2; probably dimeric. Core component of the 7SK RNP complex, at least composed of 7SK RNA, LARP7, MEPCE, HEXIM1 (or HEXIM2) and P-TEFb (composed of CDK9 and CCNT1/cyclin-T1). Interacts with the N-CoR complex through NCOR1. Interacts with ESR1 and NR3C1. May interact with NF-kappa-B through RELA. Interacts with CCNT2; mediates formation of a tripartite complex with KPNA2. Part of the HDP-RNP complex composed of at least HEXIM1, PRKDC, XRCC5, XRCC6, paraspeckle proteins (SFPQ, NONO, PSPC1, RBM14, and MATR3) and NEAT1 non-coding RNA. As to expression, ubiquitously expressed with higher expression in placenta. HEXIM1 and HEXIM2 are differentially expressed. Expressed in endocrine tissues.

Its subcellular location is the nucleus. It is found in the cytoplasm. Transcriptional regulator which functions as a general RNA polymerase II transcription inhibitor. Core component of the 7SK RNP complex: in cooperation with 7SK snRNA sequesters P-TEFb in a large inactive 7SK snRNP complex preventing RNA polymerase II phosphorylation and subsequent transcriptional elongation. May also regulate NF-kappa-B, ESR1, NR3C1 and CIITA-dependent transcriptional activity. Plays a role in the regulation of DNA virus-mediated innate immune response by assembling into the HDP-RNP complex, a complex that serves as a platform for IRF3 phosphorylation and subsequent innate immune response activation through the cGAS-STING pathway. The sequence is that of Protein HEXIM1 (HEXIM1) from Homo sapiens (Human).